The primary structure comprises 502 residues: Intracellular exo-alpha-(1-&gt;5)-L-arabinofuranosidase (502 aa).

Positions 29, 74, and 174 each coordinate alpha-L-arabinofuranose. Glu175 functions as the Proton donor/acceptor in the catalytic mechanism. 3 residues coordinate alpha-L-arabinofuranose: Tyr246, Glu294, and Gln351. Glu294 (nucleophile) is an active-site residue.

Belongs to the glycosyl hydrolase 51 family. As to quaternary structure, homohexamer; trimer of dimers.

It localises to the cytoplasm. It catalyses the reaction Hydrolysis of terminal non-reducing alpha-L-arabinofuranoside residues in alpha-L-arabinosides.. It participates in glycan metabolism; L-arabinan degradation. Its activity is regulated as follows. Strongly inhibited by Hg(2+). Its function is as follows. Involved in the degradation of arabinan and is a key enzyme in the complete degradation of the plant cell wall. Catalyzes the cleavage of terminal alpha-(1-&gt;5)-arabinofuranosyl bonds in different hemicellulosic homopolysaccharides (branched and debranched arabinans). It acts preferentially on aryl-alpha-L-arabinofuranosides, and is much less effective on aryl-beta-D-xylopyranosides. This is Intracellular exo-alpha-(1-&gt;5)-L-arabinofuranosidase (abfA) from Geobacillus stearothermophilus (Bacillus stearothermophilus).